We begin with the raw amino-acid sequence, 72 residues long: Small proline-rich protein 2A (72 aa).

Positions 1–11 (MSYQQQQCKQP) are enriched in low complexity. Positions 1–20 (MSYQQQQCKQPCQPPPVCPT) are disordered. 3 tandem repeats follow at residues 21–29 (PKCPEPCPP), 30–38 (PKCPEPCPP), and 39–47 (PKCPQPCPP). The interval 21 to 47 (PKCPEPCPPPKCPEPCPPPKCPQPCPP) is 3 X 9 AA tandem repeats of P-K-C-P-[EQ]-P-C-P-P. The interval 42 to 72 (PQPCPPQQCQQKYPPVTPSPPCQSKYPPKSK) is disordered.

The protein belongs to the cornifin (SPRR) family. In terms of processing, forms five pairs of intrachain disulfide bonds. In terms of tissue distribution, expressed in intestine; selectively expressed in goblet cells.

It localises to the secreted. It is found in the extracellular space. The protein resides in the cytoplasmic vesicle. Its subcellular location is the secretory vesicle. In terms of biological role, gut bactericidal protein that selectively kills Gram-positive bacteria by binding to negatively charged lipids on bacterial membranes, leading to bacterial membrane permeabilization and disruption. Specifically binds lipids bearing negatively charged headgroups, such as phosphatidic acid, phosphatidylserine (PS), cardiolipin (CL), and phosphatidylinositol phosphates, but not to zwitterionic or neutral lipids. Induced by type-2 cytokines in response to helminth infection and is required to protect against helminth-induced bacterial invasion of intestinal tissue. May also be involved in the development of the cornified envelope of squamous epithelia; however, additional evidences are required to confirm this result in vivo. In Homo sapiens (Human), this protein is Small proline-rich protein 2A.